The chain runs to 565 residues: Deformed epidermal autoregulatory factor 1 homolog (565 aa).

Disordered regions lie at residues 29–62 (AAAA…ETRR) and 162–189 (GLKG…EKGG). Residues 169-181 (PLTPGPQSPPTPL) show a composition bias toward pro residues. Thr171 is modified (phosphothreonine). Ser176 is subject to Phosphoserine. A Phosphothreonine modification is found at Thr179. The 81-residue stretch at 193–273 (NWDPSVYDSE…QCLIQDGILN (81 aa)) folds into the SAND domain. A Nuclear localization signal motif is present at residues 301 to 316 (KRRKKENELPTTPVKK). An interaction with LMO4 region spans residues 403–478 (IAPFPEAALP…QLKTLFEQAK (76 aa)). Thr432 is subject to Phosphothreonine. 2 positions are modified to phosphoserine: Ser443 and Ser448. Positions 504, 507, 515, 518, 524, 528, 536, and 540 each coordinate Zn(2+). The MYND-type zinc finger occupies 504-540 (CVNCGREAMSECTGCHKVNYCSTFCQRKDWKDHQHVC).

As to quaternary structure, homodimer. Interacts with LMO4; LMO4 blocks export from nucleus. Interacts with LMO2 and CLIM2. May interact with the corepressors NCOR1 and NCRO2. Identified in a complex with XRCC5 and XRCC6. Interacts (via the SAND domain) with the DNA-PK complex subunit XRCC6; the interaction is direct and may be inhibited by DNA-binding. May be phosphorylated by DNA-PK complex in a DNA independent manner (in vitro). Ubiquitous. Detected in brain, spleen, adrenal, lung, skeletal muscle, liver, kidney, and in developing germ cells in testis. In pituitary, restricted to hormone-secreting cell types.

Its subcellular location is the nucleus. The protein localises to the secreted. Its function is as follows. Transcription factor that binds to sequence with multiple copies of 5'-TTC[CG]G-3' present in its own promoter and that of the HNRPA2B1 gene. Down-regulates transcription of these genes. Binds to the retinoic acid response element (RARE) 5'-AGGGTTCACCGAAAGTTCA-3'. Activates the proenkephalin gene independently of promoter binding, probably through protein-protein interaction. When secreted, behaves as an inhibitor of cell proliferation, by arresting cells in the G0 or G1 phase. Regulates epithelial cell proliferation and side-branching in the mammary gland. Required for neural tube closure and skeletal patterning. Controls the expression of peripheral tissue antigens in pancreatic lymph nodes. Transcriptional activator of EIF4G3. May also involved in behavior. This is Deformed epidermal autoregulatory factor 1 homolog (Deaf1) from Rattus norvegicus (Rat).